A 525-amino-acid polypeptide reads, in one-letter code: Light-independent protochlorophyllide reductase subunit B (525 aa).

Asp-36 is a [4Fe-4S] cluster binding site. Asp-290 functions as the Proton donor in the catalytic mechanism. 425–426 (GL) is a binding site for substrate.

This sequence belongs to the ChlB/BchB/BchZ family. In terms of assembly, protochlorophyllide reductase is composed of three subunits; ChlL, ChlN and ChlB. Forms a heterotetramer of two ChlB and two ChlN subunits. Requires [4Fe-4S] cluster as cofactor.

The enzyme catalyses chlorophyllide a + oxidized 2[4Fe-4S]-[ferredoxin] + 2 ADP + 2 phosphate = protochlorophyllide a + reduced 2[4Fe-4S]-[ferredoxin] + 2 ATP + 2 H2O. Its pathway is porphyrin-containing compound metabolism; chlorophyll biosynthesis (light-independent). Functionally, component of the dark-operative protochlorophyllide reductase (DPOR) that uses Mg-ATP and reduced ferredoxin to reduce ring D of protochlorophyllide (Pchlide) to form chlorophyllide a (Chlide). This reaction is light-independent. The NB-protein (ChlN-ChlB) is the catalytic component of the complex. This Prochlorococcus marinus (strain MIT 9312) protein is Light-independent protochlorophyllide reductase subunit B.